A 311-amino-acid chain; its full sequence is Haloalkane dehalogenase (311 aa).

The AB hydrolase-1 domain occupies 30–148 (AIVFQHGNPS…WDDFPDEVAQ (119 aa)). Asp107 serves as the catalytic Nucleophile. Catalysis depends on Glu131, which acts as the Proton donor. Residue His272 is the Proton acceptor of the active site.

This sequence belongs to the haloalkane dehalogenase family. Type 2 subfamily. In terms of assembly, monomer.

It catalyses the reaction 1-haloalkane + H2O = a halide anion + a primary alcohol + H(+). In terms of biological role, catalyzes hydrolytic cleavage of carbon-halogen bonds in halogenated aliphatic compounds, leading to the formation of the corresponding primary alcohols, halide ions and protons. The polypeptide is Haloalkane dehalogenase (Mycolicibacterium smegmatis (strain ATCC 700084 / mc(2)155) (Mycobacterium smegmatis)).